A 75-amino-acid chain; its full sequence is Small ribosomal subunit protein bS18 (75 aa).

The protein belongs to the bacterial ribosomal protein bS18 family. Part of the 30S ribosomal subunit. Forms a tight heterodimer with protein bS6.

In terms of biological role, binds as a heterodimer with protein bS6 to the central domain of the 16S rRNA, where it helps stabilize the platform of the 30S subunit. The sequence is that of Small ribosomal subunit protein bS18 from Thermosipho melanesiensis (strain DSM 12029 / CIP 104789 / BI429).